The sequence spans 237 residues: Eukaryotic translation initiation factor 4E-1 (237 aa).

The tract at residues 1–61 (MVVEDTQKSV…KPPAALARNP (61 aa)) is disordered. The span at 25–44 (NNDDDDDDLEEGEIPVDGED) shows a compositional bias: acidic residues. A compositionally biased stretch (low complexity) spans 47–58 (ATATTKPPAALA). EIF4G-binding stretches follow at residues 62–65 (HPLE) and 72–108 (FDNPSSKSKQAAWGSSIRPIYTFATVEEFWSIYNNIH). MRNA-binding positions include 80 to 85 (KQAAWG), lysine 112, and 130 to 131 (WE). The cysteines at positions 135 and 173 are disulfide-linked. The EIF4G-binding stretch occupies residues 156-165 (YTLLAMIGEQ). MRNA is bound by residues 180-185 (RSRQDK) and 225-229 (KKLDR).

This sequence belongs to the eukaryotic initiation factor 4E family. In terms of assembly, EIF4F is a multi-subunit complex, the composition of which varies with external and internal environmental conditions. It is composed of at least EIF4A, EIF4E and EIF4G. EIF4E is also known to interact with other partners. In higher plants two isoforms of EIF4F have been identified, named isoform EIF4F and isoform EIF(iso)4F. Isoform EIF4F has subunits p220 and p26, whereas isoform EIF(iso)4F has subunits p82 and p28. (Microbial infection) Interacts with potyvirus viral genome-linked protein (VPg) in the nucleus; this interaction is possible in susceptible hosts but is impaired in resistant plants. Binds to soybean mosaic virus (SMV) VPg in the nucleus. Interacts with SMV nuclear inclusion protein A (NIa-Pro) and nuclear inclusion protein B (NIb) in the cytoplasm. According to the redox status, the Cys-135-Cys-173 disulfide bridge may have a role in regulating protein function by affecting its ability to bind capped mRNA. As to expression, mostly expressed in roots, flowers, immature pods and mature seeds, and, to a lower extent, in stems and leaves.

The protein localises to the nucleus. The protein resides in the cytoplasm. In terms of biological role, component of the protein complex eIF4F, which is involved in the recognition of the mRNA cap, ATP-dependent unwinding of 5'-terminal secondary structure and recruitment of mRNA to the ribosome. Recognizes and binds the 7-methylguanosine-containing mRNA cap during an early step in the initiation of protein synthesis and facilitates ribosome binding by inducing the unwinding of the mRNAs secondary structures. Key component of recessive resistance to potyviruses (e.g. soybean mosaic virus (SMV), bean common mosaic virus (BCMV) and watermelon mosaic virus (WMV), but not bean pod mottle virus (BPMV)). (Microbial infection) Susceptibility host factor required for viral infection by recruiting viral RNAs to the host ribosomal complex via an interaction with viral genome-linked protein (VPg). This Glycine max (Soybean) protein is Eukaryotic translation initiation factor 4E-1.